A 589-amino-acid chain; its full sequence is C-type lectin domain family 4 member F (589 aa).

The Cytoplasmic segment spans residues 1 to 39; the sequence is MDGEAVRFCTDNQCVSLHPQEVDSVAMAPAAPKIPRLVQ. A helical; Signal-anchor for type II membrane protein membrane pass occupies residues 40-60; the sequence is ATPAFMAVTLVFSLVTLFVVV. At 61-589 the chain is on the extracellular side; it reads QQQTRPVPKP…TPPCPWILSN (529 aa). N-linked (GlcNAc...) asparagine glycosylation is found at N79, N113, N207, N230, N244, N312, N385, and N399. Residues 476 to 589 form the C-type lectin domain; it reads NGGSLYYFSS…TPPCPWILSN (114 aa).

It is found in the membrane. In terms of biological role, receptor with an affinity for galactose and fucose. Could be involved in endocytosis. The sequence is that of C-type lectin domain family 4 member F (CLEC4F) from Homo sapiens (Human).